The following is a 156-amino-acid chain: Ribosomal RNA large subunit methyltransferase H (156 aa).

Residues leucine 73, glycine 104, and leucine 123 to leucine 128 each bind S-adenosyl-L-methionine.

This sequence belongs to the RNA methyltransferase RlmH family. Homodimer.

It localises to the cytoplasm. It carries out the reaction pseudouridine(1915) in 23S rRNA + S-adenosyl-L-methionine = N(3)-methylpseudouridine(1915) in 23S rRNA + S-adenosyl-L-homocysteine + H(+). Functionally, specifically methylates the pseudouridine at position 1915 (m3Psi1915) in 23S rRNA. The chain is Ribosomal RNA large subunit methyltransferase H from Aliivibrio salmonicida (strain LFI1238) (Vibrio salmonicida (strain LFI1238)).